The chain runs to 471 residues: COP9 signalosome complex subunit 1 (471 aa).

The 163-residue stretch at 249–411 (CFLLASFDHC…KILYARDVDQ (163 aa)) folds into the PCI domain. Residues 445 to 471 (HVKSPPREGSQGELTPANSQSRMSTNM) form a disordered region. Ser448 and Ser454 each carry phosphoserine. Polar residues predominate over residues 456 to 471 (GELTPANSQSRMSTNM). Thr459 is subject to Phosphothreonine. The residue at position 463 (Ser463) is a Phosphoserine.

It belongs to the CSN1 family. Component of the CSN complex, composed of COPS1/GPS1, COPS2, COPS3, COPS4, COPS5, COPS6, COPS7 (COPS7A or COPS7B), COPS8 and COPS9. In the complex, it probably interacts directly with COPS2, COPS3, COPS4 and COPS5. Interacts directly with inositol kinase ITPK1. Interacts with CAPN8. Interacts with USP48. Interacts with ASB4; this interaction negatively regulates GPS1. As to expression, expressed in the base region of the oxyntic and pyloric mucosae.

The protein resides in the cytoplasm. Its subcellular location is the nucleus. In terms of biological role, essential component of the COP9 signalosome complex (CSN), a complex involved in various cellular and developmental processes. The CSN complex is an essential regulator of the ubiquitin (Ubl) conjugation pathway by mediating the deneddylation of the cullin subunits of SCF-type E3 ligase complexes, leading to decrease the Ubl ligase activity of SCF-type complexes such as SCF, CSA or DDB2. The complex is also involved in phosphorylation of p53/TP53, c-jun/JUN, IkappaBalpha/NFKBIA, ITPK1 and IRF8/ICSBP, possibly via its association with CK2 and PKD kinases. CSN-dependent phosphorylation of TP53 and JUN promotes and protects degradation by the Ubl system, respectively. Suppresses G-protein- and mitogen-activated protein kinase-mediated signal transduction. The protein is COP9 signalosome complex subunit 1 (Gps1) of Mus musculus (Mouse).